Here is a 382-residue protein sequence, read N- to C-terminus: Mannitol-1-phosphate 5-dehydrogenase (382 aa).

3-14 (ALHFGAGNIGRG) serves as a coordination point for NAD(+).

Belongs to the mannitol dehydrogenase family.

It catalyses the reaction D-mannitol 1-phosphate + NAD(+) = beta-D-fructose 6-phosphate + NADH + H(+). The chain is Mannitol-1-phosphate 5-dehydrogenase from Pectobacterium atrosepticum (strain SCRI 1043 / ATCC BAA-672) (Erwinia carotovora subsp. atroseptica).